The following is a 97-amino-acid chain: Zinc metalloproteinase-disintegrin-like bothrojarin-4 (97 aa).

A Disintegrin domain is found at 4-90 (PPVCGNYFVE…DCPTDRFRRN (87 aa)). Val-6, Asn-9, Phe-11, Glu-13, Glu-16, and Asp-19 together coordinate Ca(2+). 7 cysteine pairs are disulfide-bonded: Cys-7–Cys-36, Cys-18–Cys-31, Cys-20–Cys-26, Cys-30–Cys-53, Cys-44–Cys-50, Cys-49–Cys-75, and Cys-62–Cys-82. Asn-32 is a glycosylation site (N-linked (GlcNAc...) asparagine). Residues 68–70 (KCD) carry the D/ECD-tripeptide; atypical (KCD) motif.

The protein belongs to the venom metalloproteinase (M12B) family. P-III subfamily. P-IIIa sub-subfamily. In terms of assembly, monomer. It depends on Zn(2+) as a cofactor. In terms of tissue distribution, expressed by the venom gland.

The protein localises to the secreted. Functionally, the hemorrhagic metalloproteinase-disintegrin-like bothrojarin-1 is a potent inhibitor of collagen-induced platelet aggregation by blockage of alpha-2/beta-1 (ITGA2/ITGB1) integrin. It does not present any fibrinogen-clotting activity. The protein is Zinc metalloproteinase-disintegrin-like bothrojarin-4 of Bothrops jararaca (Jararaca).